A 196-amino-acid chain; its full sequence is GTP cyclohydrolase 1 (196 aa).

Cys84, His87, and Cys157 together coordinate Zn(2+).

The protein belongs to the GTP cyclohydrolase I family. In terms of assembly, toroid-shaped homodecamer, composed of two pentamers of five dimers.

It catalyses the reaction GTP + H2O = 7,8-dihydroneopterin 3'-triphosphate + formate + H(+). It functions in the pathway cofactor biosynthesis; 7,8-dihydroneopterin triphosphate biosynthesis; 7,8-dihydroneopterin triphosphate from GTP: step 1/1. The polypeptide is GTP cyclohydrolase 1 (Corynebacterium glutamicum (strain ATCC 13032 / DSM 20300 / JCM 1318 / BCRC 11384 / CCUG 27702 / LMG 3730 / NBRC 12168 / NCIMB 10025 / NRRL B-2784 / 534)).